The following is a 358-amino-acid chain: Peptide chain release factor 1 (358 aa).

N5-methylglutamine is present on Gln-233.

The protein belongs to the prokaryotic/mitochondrial release factor family. Post-translationally, methylated by PrmC. Methylation increases the termination efficiency of RF1.

The protein resides in the cytoplasm. Functionally, peptide chain release factor 1 directs the termination of translation in response to the peptide chain termination codons UAG and UAA. This chain is Peptide chain release factor 1, found in Staphylococcus aureus (strain MSSA476).